The primary structure comprises 488 residues: Ribulose bisphosphate carboxylase large chain 1 (488 aa).

The substrate site is built by Asn-128 and Thr-178. The active-site Proton acceptor is the Lys-180. Residue Lys-182 coordinates substrate. Mg(2+) contacts are provided by Lys-206, Asp-208, and Glu-209. Lys-206 bears the N6-carboxylysine mark. The active-site Proton acceptor is His-298. Substrate contacts are provided by Arg-299, His-331, and Ser-383.

It belongs to the RuBisCO large chain family. Type I subfamily. In terms of assembly, heterohexadecamer of 8 large chains and 8 small chains. Requires Mg(2+) as cofactor.

The enzyme catalyses 2 (2R)-3-phosphoglycerate + 2 H(+) = D-ribulose 1,5-bisphosphate + CO2 + H2O. It carries out the reaction D-ribulose 1,5-bisphosphate + O2 = 2-phosphoglycolate + (2R)-3-phosphoglycerate + 2 H(+). Its function is as follows. RuBisCO catalyzes two reactions: the carboxylation of D-ribulose 1,5-bisphosphate, the primary event in carbon dioxide fixation, as well as the oxidative fragmentation of the pentose substrate. Both reactions occur simultaneously and in competition at the same active site. This Nitrobacter hamburgensis (strain DSM 10229 / NCIMB 13809 / X14) protein is Ribulose bisphosphate carboxylase large chain 1.